Consider the following 340-residue polypeptide: Pre-mRNA-splicing factor cwf17 (340 aa).

7 WD repeats span residues 48–87, 91–130, 133–173, 175–214, 217–256, 267–306, and 308–339; these read GHTAEVLVARFDPSGSYFASGGMDRQILLWNVFGDVKNYG, GCKGAITDLQWSRDSRVVYCSSSDTHLMSWDAVSGQKIRK, GHAG…CIKT, EEKYPLTAVAIAQQGTQVFIGGIDGAIKIWDLRNNHCSHV, GHKDIITSLAISKDGSSLLSNSMDNTVRIFDVKPFASAQR, GQEHNLLGVAWSRNSRFVGAGSSDKNVYVWSATGDLRYVL, and GHEGSVNHVDFHPHQDIILSCSSDRTIFLGEL.

In terms of assembly, belongs to the 40S cdc5-associated complex (or cwf complex), a spliceosome sub-complex reminiscent of a late-stage spliceosome composed of the U2, U5 and U6 snRNAs and at least brr2, cdc5, cwf2/prp3, cwf3/syf1, cwf4/syf3, cwf5/ecm2, spp42/cwf6, cwf7/spf27, cwf8, cwf9, cwf10, cwf11, cwf12, prp45/cwf13, cwf14, cwf15, cwf16, cwf17, cwf18, cwf19, cwf20, cwf21, cwf22, cwf23, cwf24, cwf25, cwf26, cyp7/cwf27, cwf28, cwf29/ist3, lea1, msl1, prp5/cwf1, prp10, prp12/sap130, prp17, prp22, sap61, sap62, sap114, sap145, slu7, smb1, smd1, smd3, smf1, smg1 and syf2.

The protein localises to the nucleus. Its function is as follows. Involved in mRNA splicing where it associates with cdc5 and the other cwf proteins as part of the spliceosome. In Schizosaccharomyces pombe (strain 972 / ATCC 24843) (Fission yeast), this protein is Pre-mRNA-splicing factor cwf17 (cwf17).